Here is a 514-residue protein sequence, read N- to C-terminus: ATP synthase subunit alpha (514 aa).

An ATP-binding site is contributed by 170 to 177 (GDRQIGKT).

Belongs to the ATPase alpha/beta chains family. F-type ATPases have 2 components, CF(1) - the catalytic core - and CF(0) - the membrane proton channel. CF(1) has five subunits: alpha(3), beta(3), gamma(1), delta(1), epsilon(1). CF(0) has three main subunits: a(1), b(2) and c(9-12). The alpha and beta chains form an alternating ring which encloses part of the gamma chain. CF(1) is attached to CF(0) by a central stalk formed by the gamma and epsilon chains, while a peripheral stalk is formed by the delta and b chains.

It localises to the cell inner membrane. The enzyme catalyses ATP + H2O + 4 H(+)(in) = ADP + phosphate + 5 H(+)(out). Its function is as follows. Produces ATP from ADP in the presence of a proton gradient across the membrane. The alpha chain is a regulatory subunit. The sequence is that of ATP synthase subunit alpha from Pseudomonas putida (strain GB-1).